Reading from the N-terminus, the 118-residue chain is UPF0344 protein BLi01172/BL01343 (118 aa).

4 helical membrane-spanning segments follow: residues isoleucine 6–glycine 26, isoleucine 33–phenylalanine 53, glutamate 62–isoleucine 82, and alanine 89–leucine 109.

Belongs to the UPF0344 family.

It is found in the cell membrane. This chain is UPF0344 protein BLi01172/BL01343, found in Bacillus licheniformis (strain ATCC 14580 / DSM 13 / JCM 2505 / CCUG 7422 / NBRC 12200 / NCIMB 9375 / NCTC 10341 / NRRL NRS-1264 / Gibson 46).